The chain runs to 90 residues: Molybdopterin synthase sulfur carrier subunit (90 aa).

Gly-90 bears the 1-thioglycine; alternate mark. A Glycyl adenylate; alternate modification is found at Gly-90.

This sequence belongs to the MoaD family. MOCS2A subfamily. In terms of assembly, heterotetramer; composed of 2 small (Mocs2A) and 2 large (Mocs2B) subunits. In terms of processing, C-terminal thiocarboxylation occurs in 2 steps, it is first acyl-adenylated (-COAMP) via the hesA/moeB/thiF part of MOCS3, then thiocarboxylated (-COSH) via the rhodanese domain of MOCS3.

The protein localises to the cytoplasm. The protein operates within cofactor biosynthesis; molybdopterin biosynthesis. Acts as a sulfur carrier required for molybdopterin biosynthesis. Component of the molybdopterin synthase complex that catalyzes the conversion of precursor Z into molybdopterin by mediating the incorporation of 2 sulfur atoms into precursor Z to generate a dithiolene group. In the complex, serves as sulfur donor by being thiocarboxylated (-COSH) at its C-terminus by MOCS3. After interaction with Mocs2B, the sulfur is then transferred to precursor Z to form molybdopterin. Involved during biosynthesis of the molybdenum cofactor. The protein is Molybdopterin synthase sulfur carrier subunit of Drosophila melanogaster (Fruit fly).